Consider the following 527-residue polypeptide: DNA polymerase epsilon subunit 2 (527 aa).

It belongs to the DNA polymerase epsilon subunit B family. Component of the DNA polymerase epsilon complex consisting of four subunits: the catalytic subunit POLE and the accessory subunits POLE2, POLE3 and POLE4.

The protein resides in the nucleus. Accessory component of the DNA polymerase epsilon complex. Participates in DNA repair and in chromosomal DNA replication. The chain is DNA polymerase epsilon subunit 2 (Pole2) from Mus musculus (Mouse).